A 464-amino-acid chain; its full sequence is Cysteine--tRNA ligase (464 aa).

Cys29 is a binding site for Zn(2+). The 'HIGH' region signature appears at 31–41; it reads ATVQGDPHIGH. Zn(2+)-binding residues include Cys207, His232, and Glu236. The 'KMSKS' region signature appears at 263-267; sequence KMSKS. Residue Lys266 participates in ATP binding.

This sequence belongs to the class-I aminoacyl-tRNA synthetase family. Monomer. It depends on Zn(2+) as a cofactor.

The protein localises to the cytoplasm. It carries out the reaction tRNA(Cys) + L-cysteine + ATP = L-cysteinyl-tRNA(Cys) + AMP + diphosphate. This chain is Cysteine--tRNA ligase, found in Rhodococcus opacus (strain B4).